Reading from the N-terminus, the 163-residue chain is C-type lectin lectoxin-Lio2 (163 aa).

The first 21 residues, 1–21 (MERFIFAALLVVALSLSGTGA), serve as a signal peptide directing secretion. Disulfide bonds link Cys-25–Cys-36, Cys-53–Cys-152, and Cys-127–Cys-144. A C-type lectin domain is found at 32 to 153 (SDGYCYKVFK…CRSKRYFICK (122 aa)). The Mannose-binding motif lies at 117-119 (EPN). Ca(2+) contacts are provided by Glu-125 and Asp-141.

Belongs to the true venom lectin family. As to expression, expressed by the venom gland.

Its subcellular location is the secreted. Mannose-binding lectin which recognizes specific carbohydrate structures and agglutinates a variety of animal cells by binding to cell-surface glycoproteins and glycolipids. May be a calcium-dependent lectin. This Erythrolamprus poecilogyrus (Water snake) protein is C-type lectin lectoxin-Lio2.